A 132-amino-acid polypeptide reads, in one-letter code: Small ribosomal subunit protein uS8 (132 aa).

The protein belongs to the universal ribosomal protein uS8 family. As to quaternary structure, part of the 30S ribosomal subunit. Contacts proteins S5 and S12.

In terms of biological role, one of the primary rRNA binding proteins, it binds directly to 16S rRNA central domain where it helps coordinate assembly of the platform of the 30S subunit. The polypeptide is Small ribosomal subunit protein uS8 (Aliarcobacter butzleri (strain RM4018) (Arcobacter butzleri)).